We begin with the raw amino-acid sequence, 354 residues long: Rhodopsin (354 aa).

Over 1 to 36 (MNGTEGPNFYVPMSNKTGVVRSPFDYPQYYLAEPWQ) the chain is Extracellular. N-linked (GlcNAc...) asparagine glycosylation is found at asparagine 2 and asparagine 15. Residues 37–61 (YSALAAYMFLLILLGLPINFMTLFV) form a helical membrane-spanning segment. Residues 62 to 73 (TIQHKKLRTPLN) are Cytoplasmic-facing. The helical transmembrane segment at 74-96 (YILLNLVFANHFMVLCGFTVTMY) threads the bilayer. Residues 97-110 (TSMHGYFIFGPTGC) are Extracellular-facing. Cysteines 110 and 187 form a disulfide. A helical transmembrane segment spans residues 111–133 (YIEGFFATLGGEVALWSLVVLAV). The 'Ionic lock' involved in activated form stabilization motif lies at 134–136 (ERY). Topologically, residues 134–152 (ERYIVVCKPMANFRFGENH) are cytoplasmic. Residues 153 to 173 (AIMGVAFTWIMALSCAAPPLF) form a helical membrane-spanning segment. Residues 174–202 (GWSRYIPEGMQCSCGVDYYTLKPEVNNES) are Extracellular-facing. The helical transmembrane segment at 203 to 224 (FVIYMFIVHFTIPLIVIFFCYG) threads the bilayer. Topologically, residues 225–252 (RLLCTVKEAAAQQQESLTTQKAEKEVTR) are cytoplasmic. Residues 253–274 (MVVIMVVFFLICWVPYAYVAFY) form a helical membrane-spanning segment. Residues 275–286 (IFTHQGSNFGPV) are Extracellular-facing. Residues 287–308 (FMTVPAFFAKSSAIYNPVIYIV) traverse the membrane as a helical segment. Lysine 296 carries the N6-(retinylidene)lysine modification. At 309 to 354 (LNKQFRNCLITTLCCGKNPFGDEDGSSAATSKTEASSVSSSQVSPA) the chain is on the cytoplasmic side. Residues cysteine 322 and cysteine 323 are each lipidated (S-palmitoyl cysteine). The segment at 331–354 (EDGSSAATSKTEASSVSSSQVSPA) is disordered. The span at 334–354 (SSAATSKTEASSVSSSQVSPA) shows a compositional bias: low complexity.

It belongs to the G-protein coupled receptor 1 family. Opsin subfamily. Post-translationally, contains one covalently linked retinal chromophore. Upon light absorption, the covalently bound 11-cis-retinal is converted to all-trans-retinal. After hydrolysis of the Schiff base and release of the covalently bound all-trans-retinal, active rhodopsin is regenerated by binding of a fresh molecule of 11-cis-retinal.

It localises to the membrane. The protein localises to the cell projection. It is found in the cilium. The protein resides in the photoreceptor outer segment. In terms of biological role, photoreceptor required for image-forming vision at low light intensity. Required for photoreceptor cell viability after birth. Light-induced isomerization of 11-cis to all-trans retinal triggers a conformational change that activates signaling via G-proteins. Subsequent receptor phosphorylation mediates displacement of the bound G-protein alpha subunit by arrestin and terminates signaling. The polypeptide is Rhodopsin (rho) (Xenopus laevis (African clawed frog)).